Here is a 537-residue protein sequence, read N- to C-terminus: CTP synthase (537 aa).

Residues 1–268 (MPFKCIFLTG…STFITEKLGL (268 aa)) are amidoligase domain. Residue S14 coordinates CTP. S14 contributes to the UTP binding site. 15 to 20 (SLGKGL) serves as a coordination point for ATP. Y55 contacts L-glutamine. D72 provides a ligand contact to ATP. Residues D72 and E142 each coordinate Mg(2+). CTP is bound by residues 149-151 (DIE), 188-193 (KTKPTQ), and K224. Residues 188–193 (KTKPTQ) and K224 contribute to the UTP site. Residues 294–533 (RIGLVGKYVQ…IQAALLYSKN (240 aa)) enclose the Glutamine amidotransferase type-1 domain. G353 contributes to the L-glutamine binding site. The Nucleophile; for glutamine hydrolysis role is filled by C380. L-glutamine is bound by residues 381–384 (LGMQ), E404, and R461. Active-site residues include H506 and E508.

It belongs to the CTP synthase family. In terms of assembly, homotetramer.

The enzyme catalyses UTP + L-glutamine + ATP + H2O = CTP + L-glutamate + ADP + phosphate + 2 H(+). It catalyses the reaction L-glutamine + H2O = L-glutamate + NH4(+). It carries out the reaction UTP + NH4(+) + ATP = CTP + ADP + phosphate + 2 H(+). It participates in pyrimidine metabolism; CTP biosynthesis via de novo pathway; CTP from UDP: step 2/2. Allosterically activated by GTP, when glutamine is the substrate; GTP has no effect on the reaction when ammonia is the substrate. The allosteric effector GTP functions by stabilizing the protein conformation that binds the tetrahedral intermediate(s) formed during glutamine hydrolysis. Inhibited by the product CTP, via allosteric rather than competitive inhibition. Functionally, catalyzes the ATP-dependent amination of UTP to CTP with either L-glutamine or ammonia as the source of nitrogen. Regulates intracellular CTP levels through interactions with the four ribonucleotide triphosphates. This chain is CTP synthase, found in Chlamydia caviae (strain ATCC VR-813 / DSM 19441 / 03DC25 / GPIC) (Chlamydophila caviae).